The chain runs to 67 residues: Small ribosomal subunit protein eS17 (67 aa).

Belongs to the eukaryotic ribosomal protein eS17 family.

This is Small ribosomal subunit protein eS17 from Pyrococcus abyssi (strain GE5 / Orsay).